We begin with the raw amino-acid sequence, 570 residues long: Glutamate--tRNA ligase (570 aa).

The 'HIGH' region signature appears at 107–117 (PNPDFVLHLGS).

This sequence belongs to the class-I aminoacyl-tRNA synthetase family. Glutamate--tRNA ligase type 2 subfamily.

It localises to the cytoplasm. The catalysed reaction is tRNA(Glu) + L-glutamate + ATP = L-glutamyl-tRNA(Glu) + AMP + diphosphate. In terms of biological role, catalyzes the attachment of glutamate to tRNA(Glu) in a two-step reaction: glutamate is first activated by ATP to form Glu-AMP and then transferred to the acceptor end of tRNA(Glu). The sequence is that of Glutamate--tRNA ligase from Pyrobaculum aerophilum (strain ATCC 51768 / DSM 7523 / JCM 9630 / CIP 104966 / NBRC 100827 / IM2).